The following is a 221-amino-acid chain: Late protein I196L (221 aa).

3 tandem repeats follow at residues 28–48 (SNYL…PTTS), 49–69 (SNYS…PTTS), and 70–90 (SNYS…PTTS). The stretch at 91 to 112 (SNYSMTAIPNNISDKEDYTYFS) is one 4; approximate repeat.

This sequence belongs to the asfivirus I196L family.

In African swine fever virus (isolate Tick/Malawi/Lil 20-1/1983) (ASFV), this protein is Late protein I196L.